Here is a 167-residue protein sequence, read N- to C-terminus: SsrA-binding protein (167 aa).

Positions 144-167 (HDKRAADKEKQSKKEVRSAMAKYQ) are disordered. Over residues 146-160 (KRAADKEKQSKKEVR) the composition is skewed to basic and acidic residues.

This sequence belongs to the SmpB family.

It localises to the cytoplasm. In terms of biological role, required for rescue of stalled ribosomes mediated by trans-translation. Binds to transfer-messenger RNA (tmRNA), required for stable association of tmRNA with ribosomes. tmRNA and SmpB together mimic tRNA shape, replacing the anticodon stem-loop with SmpB. tmRNA is encoded by the ssrA gene; the 2 termini fold to resemble tRNA(Ala) and it encodes a 'tag peptide', a short internal open reading frame. During trans-translation Ala-aminoacylated tmRNA acts like a tRNA, entering the A-site of stalled ribosomes, displacing the stalled mRNA. The ribosome then switches to translate the ORF on the tmRNA; the nascent peptide is terminated with the 'tag peptide' encoded by the tmRNA and targeted for degradation. The ribosome is freed to recommence translation, which seems to be the essential function of trans-translation. In Synechococcus sp. (strain CC9902), this protein is SsrA-binding protein.